We begin with the raw amino-acid sequence, 396 residues long: N-acyl-phosphatidylethanolamine-hydrolyzing phospholipase D (396 aa).

N-acetylmethionine is present on Met-1. Composition is skewed to polar residues over residues Met-1–Pro-12 and Asn-26–Ser-37. Positions Met-1–Arg-41 are disordered. Positions 185 and 187 each coordinate Zn(2+). Tyr-188 is an an N-acyl-1,2-diacyl-sn-glycero-3-phosphoethanolamine binding site. Asp-189, His-190, and His-253 together coordinate Zn(2+). Lys-256 is a deoxycholate binding site. A Zn(2+)-binding site is contributed by Asp-284. His-321 is a binding site for an N-acyl-1,2-diacyl-sn-glycero-3-phosphoethanolamine. A Zn(2+)-binding site is contributed by His-343. Ala-348 contacts deoxycholate.

Belongs to the NAPE-PLD family. As to quaternary structure, homodimer. Bile acids promote the assembly of inactive monomers into an active dimer and enable catalysis. Requires Zn(2+) as cofactor. As to expression, widely expressed. Highest expression in brain, kidney and testis (at protein level). Expressed in adipose tissue (at protein level).

It is found in the golgi apparatus membrane. Its subcellular location is the early endosome membrane. The protein localises to the nucleus envelope. It localises to the nucleus. The protein resides in the nucleoplasm. The catalysed reaction is an N-acyl-1,2-diacyl-sn-glycero-3-phosphoethanolamine + H2O = an N-acylethanolamine + a 1,2-diacyl-sn-glycero-3-phosphate + H(+). It carries out the reaction N-butanoyl-1-hexadecanoyl-2-(9Z,12Z-octadecadienoyl)-sn-glycero-3-phosphoethanolamine + H2O = N-butanoyl ethanolamine + 1-hexadecanoyl-2-(9Z,12Z-octadecadienoyl)-sn-glycero-3-phosphate + H(+). It catalyses the reaction N-hexanoyl-1-hexadecanoyl-2-(9Z,12Z-octadecadienoyl)-sn-glycero-3-phosphoethanolamine + H2O = N-hexanoyl ethanolamine + 1-hexadecanoyl-2-(9Z,12Z-octadecadienoyl)-sn-glycero-3-phosphate + H(+). The enzyme catalyses N-octanoyl-1-hexadecanoyl-2-(9Z,12Z-octadecadienoyl)-sn-glycero-3-phosphoethanolamine + H2O = N-octanoyl ethanolamine + 1-hexadecanoyl-2-(9Z,12Z-octadecadienoyl)-sn-glycero-3-phosphate + H(+). The catalysed reaction is N-decanoyl-1-hexadecanoyl-2-(9Z,12Z-octadecadienoyl)-sn-glycero-3-phosphoethanolamine + H2O = N-decanoyl ethanolamine + 1-hexadecanoyl-2-(9Z,12Z-octadecadienoyl)-sn-glycero-3-phosphate + H(+). It carries out the reaction N-dodecanoyl-1,2-di-(9Z-octadecenoyl)-sn-glycero-3-phosphoethanolamine + H2O = N-dodecanoylethanolamine + 1,2-di-(9Z-octadecenoyl)-sn-glycero-3-phosphate + H(+). It catalyses the reaction N-tetradecanoyl-1,2-di-(9Z-octadecenoyl)-sn-glycero-3-phosphoethanolamine + H2O = N-tetradecanoylethanolamine + 1,2-di-(9Z-octadecenoyl)-sn-glycero-3-phosphate + H(+). The enzyme catalyses N-hexadecanoyl-1,2-di-(9Z-octadecenoyl)-sn-glycero-3-phosphoethanolamine + H2O = N-hexadecanoylethanolamine + 1,2-di-(9Z-octadecenoyl)-sn-glycero-3-phosphate + H(+). The catalysed reaction is N,1-dihexadecanoyl-2-(9Z,12Z-octadecadienoyl)-sn-glycero-3-phosphoethanolamine + H2O = 1-hexadecanoyl-2-(9Z,12Z-octadecadienoyl)-sn-glycero-3-phosphate + N-hexadecanoylethanolamine + H(+). It carries out the reaction N-octadecanoyl-1,2-di-(9Z-octadecenoyl)-sn-glycero-3-phosphoethanolamine + H2O = N-octadecanoyl ethanolamine + 1,2-di-(9Z-octadecenoyl)-sn-glycero-3-phosphate + H(+). It catalyses the reaction N,1,2-tri-(9Z-octadecenoyl)-sn-glycero-3-phosphoethanolamine + H2O = N-(9Z-octadecenoyl) ethanolamine + 1,2-di-(9Z-octadecenoyl)-sn-glycero-3-phosphate + H(+). The enzyme catalyses N-(5Z,8Z,11Z,14Z-eicosatetraenoyl)-1,2-diacyl-sn-glycero-3-phosphoethanolamine + H2O = N-(5Z,8Z,11Z,14Z-eicosatetraenoyl)-ethanolamine + a 1,2-diacyl-sn-glycero-3-phosphate + H(+). The catalysed reaction is N-(5Z,8Z,11Z,14Z-eicosatetraenoyl)-1,2-di-(9Z-octadecenoyl)-sn-glycero-3-phosphoethanolamine + H2O = N-(5Z,8Z,11Z,14Z-eicosatetraenoyl)-ethanolamine + 1,2-di-(9Z-octadecenoyl)-sn-glycero-3-phosphate + H(+). It carries out the reaction 1-O-(1Z-octadecenoyl)-2-(9Z-octadecenoyl)-sn-glycero-3-phospho-N-hexadecanoyl-ethanolamine + H2O = 1-O-(1Z-octadecenoyl)-2-(9Z-octadecenoyl)-sn-glycero-3-phosphate + N-hexadecanoylethanolamine + H(+). It catalyses the reaction N,1-diacyl-sn-glycero-3-phosphoethanolamine + H2O = an N-acylethanolamine + a 1-acyl-sn-glycero-3-phosphate + H(+). The enzyme catalyses N,1-dihexadecanoyl-sn-glycero-3-phosphoethanolamine + H2O = N-hexadecanoylethanolamine + 1-hexadecanoyl-sn-glycero-3-phosphate + H(+). The catalysed reaction is N-(5Z,8Z,11Z,14Z-eicosatetraenoyl)-1-(9Z-octadecenoyl)-sn-glycero-3-phosphoethanolamine + H2O = N-(5Z,8Z,11Z,14Z-eicosatetraenoyl)-ethanolamine + 1-(9Z-octadecenoyl)-sn-glycero-3-phosphate + H(+). Its activity is regulated as follows. Activated by divalent cations. Activated by bile acids. Activated by membrane phospholipids such as phosphatidylethanolamines. Inhibited by cardiolipins. D-type phospholipase that hydrolyzes N-acyl-phosphatidylethanolamines (NAPEs) to produce bioactive N-acylethanolamines/fatty acid ethanolamides (NAEs/FAEs) and phosphatidic acid. Cleaves the terminal phosphodiester bond of diacyl- and alkenylacyl-NAPEs, primarily playing a role in the generation of long-chain saturated and monounsaturated NAEs in the brain. May control NAPE homeostasis in dopaminergic neuron membranes and regulate neuron survival, partly through RAC1 activation. As a regulator of lipid metabolism in the adipose tissue, mediates the crosstalk between adipocytes, gut microbiota and immune cells to control body temperature and weight. In particular, regulates energy homeostasis by promoting cold-induced brown or beige adipocyte differentiation program to generate heat from fatty acids and glucose. Has limited D-type phospholipase activity toward N-acyl lyso-NAPEs. In Rattus norvegicus (Rat), this protein is N-acyl-phosphatidylethanolamine-hydrolyzing phospholipase D (Napepld).